A 351-amino-acid chain; its full sequence is Anthranilate phosphoribosyltransferase (351 aa).

5-phospho-alpha-D-ribose 1-diphosphate-binding positions include glycine 92, 95–96 (GD), threonine 100, 102–105 (NIST), 120–128 (KHGNRAASS), and serine 132. Glycine 92 provides a ligand contact to anthranilate. A Mg(2+)-binding site is contributed by serine 104. Asparagine 123 serves as a coordination point for anthranilate. Arginine 178 is a binding site for anthranilate. Mg(2+) is bound by residues aspartate 236 and glutamate 237.

Belongs to the anthranilate phosphoribosyltransferase family. In terms of assembly, homodimer. It depends on Mg(2+) as a cofactor.

It catalyses the reaction N-(5-phospho-beta-D-ribosyl)anthranilate + diphosphate = 5-phospho-alpha-D-ribose 1-diphosphate + anthranilate. It participates in amino-acid biosynthesis; L-tryptophan biosynthesis; L-tryptophan from chorismate: step 2/5. Functionally, catalyzes the transfer of the phosphoribosyl group of 5-phosphorylribose-1-pyrophosphate (PRPP) to anthranilate to yield N-(5'-phosphoribosyl)-anthranilate (PRA). The sequence is that of Anthranilate phosphoribosyltransferase from Deinococcus geothermalis (strain DSM 11300 / CIP 105573 / AG-3a).